The primary structure comprises 611 residues: Dihydroxy-acid dehydratase (611 aa).

Asp81 serves as a coordination point for Mg(2+). Cys122 serves as a coordination point for [2Fe-2S] cluster. Asp123 and Lys124 together coordinate Mg(2+). Position 124 is an N6-carboxylysine (Lys124). Cys195 contacts [2Fe-2S] cluster. A Mg(2+)-binding site is contributed by Glu491. The Proton acceptor role is filled by Ser517.

The protein belongs to the IlvD/Edd family. In terms of assembly, homodimer. The cofactor is [2Fe-2S] cluster. Mg(2+) serves as cofactor.

The catalysed reaction is (2R)-2,3-dihydroxy-3-methylbutanoate = 3-methyl-2-oxobutanoate + H2O. It catalyses the reaction (2R,3R)-2,3-dihydroxy-3-methylpentanoate = (S)-3-methyl-2-oxopentanoate + H2O. It functions in the pathway amino-acid biosynthesis; L-isoleucine biosynthesis; L-isoleucine from 2-oxobutanoate: step 3/4. The protein operates within amino-acid biosynthesis; L-valine biosynthesis; L-valine from pyruvate: step 3/4. Functions in the biosynthesis of branched-chain amino acids. Catalyzes the dehydration of (2R,3R)-2,3-dihydroxy-3-methylpentanoate (2,3-dihydroxy-3-methylvalerate) into 2-oxo-3-methylpentanoate (2-oxo-3-methylvalerate) and of (2R)-2,3-dihydroxy-3-methylbutanoate (2,3-dihydroxyisovalerate) into 2-oxo-3-methylbutanoate (2-oxoisovalerate), the penultimate precursor to L-isoleucine and L-valine, respectively. This chain is Dihydroxy-acid dehydratase, found in Brucella melitensis biotype 1 (strain ATCC 23456 / CCUG 17765 / NCTC 10094 / 16M).